The primary structure comprises 98 residues: NADH-ubiquinone oxidoreductase chain 4L (98 aa).

3 consecutive transmembrane segments (helical) span residues 1 to 21 (MPFI…GLLM), 29 to 49 (SLLC…LLCL), and 61 to 81 (MILL…LVMV).

Belongs to the complex I subunit 4L family. As to quaternary structure, core subunit of respiratory chain NADH dehydrogenase (Complex I) which is composed of 45 different subunits.

It localises to the mitochondrion inner membrane. The catalysed reaction is a ubiquinone + NADH + 5 H(+)(in) = a ubiquinol + NAD(+) + 4 H(+)(out). Core subunit of the mitochondrial membrane respiratory chain NADH dehydrogenase (Complex I) which catalyzes electron transfer from NADH through the respiratory chain, using ubiquinone as an electron acceptor. Part of the enzyme membrane arm which is embedded in the lipid bilayer and involved in proton translocation. The protein is NADH-ubiquinone oxidoreductase chain 4L (MT-ND4L) of Dugong dugon (Dugong).